We begin with the raw amino-acid sequence, 954 residues long: Isoleucine--tRNA ligase (954 aa).

The short motif at 58 to 68 is the 'HIGH' region element; it reads PYANGDIHIGH. L-isoleucyl-5'-AMP is bound at residue Glu572. A 'KMSKS' region motif is present at residues 613-617; the sequence is KMSKS. ATP is bound at residue Lys616. Residues Cys917, Cys920, Cys937, and Cys940 each coordinate Zn(2+).

Belongs to the class-I aminoacyl-tRNA synthetase family. IleS type 1 subfamily. In terms of assembly, monomer. It depends on Zn(2+) as a cofactor.

It localises to the cytoplasm. It carries out the reaction tRNA(Ile) + L-isoleucine + ATP = L-isoleucyl-tRNA(Ile) + AMP + diphosphate. Its function is as follows. Catalyzes the attachment of isoleucine to tRNA(Ile). As IleRS can inadvertently accommodate and process structurally similar amino acids such as valine, to avoid such errors it has two additional distinct tRNA(Ile)-dependent editing activities. One activity is designated as 'pretransfer' editing and involves the hydrolysis of activated Val-AMP. The other activity is designated 'posttransfer' editing and involves deacylation of mischarged Val-tRNA(Ile). The polypeptide is Isoleucine--tRNA ligase (Photobacterium profundum (strain SS9)).